The following is a 154-amino-acid chain: SsrA-binding protein (154 aa).

A disordered region spans residues Lys135 to Arg154.

The protein belongs to the SmpB family.

It localises to the cytoplasm. Required for rescue of stalled ribosomes mediated by trans-translation. Binds to transfer-messenger RNA (tmRNA), required for stable association of tmRNA with ribosomes. tmRNA and SmpB together mimic tRNA shape, replacing the anticodon stem-loop with SmpB. tmRNA is encoded by the ssrA gene; the 2 termini fold to resemble tRNA(Ala) and it encodes a 'tag peptide', a short internal open reading frame. During trans-translation Ala-aminoacylated tmRNA acts like a tRNA, entering the A-site of stalled ribosomes, displacing the stalled mRNA. The ribosome then switches to translate the ORF on the tmRNA; the nascent peptide is terminated with the 'tag peptide' encoded by the tmRNA and targeted for degradation. The ribosome is freed to recommence translation, which seems to be the essential function of trans-translation. This chain is SsrA-binding protein, found in Microcystis aeruginosa (strain NIES-843 / IAM M-2473).